Reading from the N-terminus, the 333-residue chain is Putative fimbrium anchoring subunit Fim4B (333 aa).

The first 20 residues, Met1 to Gly20, serve as a signal peptide directing secretion. The N-palmitoyl cysteine moiety is linked to residue Cys21. A lipid anchor (S-diacylglycerol cysteine) is attached at Cys21. The segment at Glu274–Asn333 is disordered. Basic and acidic residues predominate over residues Pro294–Glu304. Gly residues predominate over residues Asp310–Asp320.

It belongs to the bacteroidetes fimbrillin superfamily. FimB/Mfa2 family.

The protein resides in the cell outer membrane. Putative fimbrium anchoring subunit. The polypeptide is Putative fimbrium anchoring subunit Fim4B (Bacteroides ovatus (strain ATCC 8483 / DSM 1896 / JCM 5824 / BCRC 10623 / CCUG 4943 / NCTC 11153)).